A 384-amino-acid chain; its full sequence is Deoxyguanosinetriphosphate triphosphohydrolase-like protein (384 aa).

The interval 13–42 (LASYASDPSKTRGRRHSEPPPENRTEFQRD) is disordered. Positions 28–42 (HSEPPPENRTEFQRD) are enriched in basic and acidic residues. The 136-residue stretch at 73-208 (RLTHSLEVAQ…ANLADEVAYN (136 aa)) folds into the HD domain.

It belongs to the dGTPase family. Type 2 subfamily.

This is Deoxyguanosinetriphosphate triphosphohydrolase-like protein from Bordetella bronchiseptica (strain ATCC BAA-588 / NCTC 13252 / RB50) (Alcaligenes bronchisepticus).